A 592-amino-acid chain; its full sequence is Methionine--tRNA ligase (592 aa).

A 'HIGH' region motif is present at residues 12 to 22 (PYANGPFHVGH). Residues C144, C147, C157, and C160 each contribute to the Zn(2+) site. Residues 342 to 346 (KMSTS) carry the 'KMSKS' region motif. T345 provides a ligand contact to ATP.

The protein belongs to the class-I aminoacyl-tRNA synthetase family. MetG type 1 subfamily. Monomer. It depends on Zn(2+) as a cofactor.

The protein resides in the cytoplasm. The enzyme catalyses tRNA(Met) + L-methionine + ATP = L-methionyl-tRNA(Met) + AMP + diphosphate. Its function is as follows. Is required not only for elongation of protein synthesis but also for the initiation of all mRNA translation through initiator tRNA(fMet) aminoacylation. The sequence is that of Methionine--tRNA ligase from Roseiflexus castenholzii (strain DSM 13941 / HLO8).